Reading from the N-terminus, the 164-residue chain is Arginine repressor (164 aa).

Belongs to the ArgR family.

The protein resides in the cytoplasm. The protein operates within amino-acid biosynthesis; L-arginine biosynthesis [regulation]. Its function is as follows. Regulates arginine biosynthesis genes. The protein is Arginine repressor of Thermus thermophilus (strain ATCC BAA-163 / DSM 7039 / HB27).